The primary structure comprises 95 residues: Class II hydrophobin 3 (95 aa).

The N-terminal stretch at 1–16 (MKLLAVAALLAGAAIA) is a signal peptide. 4 disulfides stabilise this stretch: C28–C77, C38–C68, C39–C51, and C78–C89.

This sequence belongs to the cerato-ulmin hydrophobin family.

It localises to the secreted. It is found in the cell wall. In terms of biological role, aerial growth, conidiation, and dispersal of filamentous fungi in the environment rely upon a capability of their secreting small amphipathic proteins called hydrophobins (HPBs) with low sequence identity. Class I can self-assemble into an outermost layer of rodlet bundles on aerial cell surfaces, conferring cellular hydrophobicity that supports fungal growth, development and dispersal; whereas Class II form highly ordered films at water-air interfaces through intermolecular interactions but contribute nothing to the rodlet structure. Hyd3 plays a neglectable role in hyphal growth and asexual development and does not seem involved in cellular hydrophobicity, conidial adhesion, stress tolerance nor insect pathogenicity. The polypeptide is Class II hydrophobin 3 (Metarhizium robertsii (strain ARSEF 23 / ATCC MYA-3075) (Metarhizium anisopliae (strain ARSEF 23))).